The chain runs to 565 residues: uncharacterized protein (565 aa).

The next 5 helical transmembrane spans lie at phenylalanine 4 to valine 26, glycine 33 to alanine 55, serine 68 to leucine 90, tyrosine 97 to phenylalanine 119, and isoleucine 162 to leucine 184. RCK C-terminal domains follow at residues proline 210 to glutamate 295 and valine 296 to valine 379. 5 helical membrane-spanning segments follow: residues leucine 389–glycine 411, glycine 415–isoleucine 432, leucine 453–threonine 472, isoleucine 482–isoleucine 504, and tryptophan 539–methionine 561.

Belongs to the AAE transporter (TC 2.A.81) family.

It localises to the cell membrane. This is an uncharacterized protein from Bordetella bronchiseptica (strain ATCC BAA-588 / NCTC 13252 / RB50) (Alcaligenes bronchisepticus).